The chain runs to 352 residues: MTKRKLSKGQQRRVQENHKKRLQSKEKKNHVELDDTQLGEATEGLVISRFGQHADIEAADGSITRCNIRRTISSLVTGDRVVWRPALQTQENVRVNGIVEAVHERTSVLTRPDYYDGIKPIAANIDQIIIVSAILPELSLNIIDRYLVACETLNIEPLIVLNKVDMLDAESRAMVSEWMQIYKDIGYRVLEVSSYTKEGLEALTQALIGRISIFAGQSGVGKSSLLNTLLPPMEESILVNQVSDNSGLGQHTTTASRLYHFPLGGDVIDSPGVREFGLWHLTPEQVTKGFIEFRPFLGGCKFRDCKHNDDPGCLITEAVDKGEIAPTRFENYHRILESMSQVKVRKNINLDS.

Residues 1–11 are compositionally biased toward basic residues; it reads MTKRKLSKGQQ. Residues 1–35 are disordered; the sequence is MTKRKLSKGQQRRVQENHKKRLQSKEKKNHVELDD. Basic and acidic residues predominate over residues 13 to 33; it reads RVQENHKKRLQSKEKKNHVEL. The 163-residue stretch at 114–276 folds into the CP-type G domain; sequence YYDGIKPIAA…VIDSPGVREF (163 aa). GTP-binding positions include 162-165 and 216-224; these read NKVD and GQSGVGKSS. Residues Cys300, Cys305, His307, and Cys313 each contribute to the Zn(2+) site.

It belongs to the TRAFAC class YlqF/YawG GTPase family. RsgA subfamily. Monomer. Associates with 30S ribosomal subunit, binds 16S rRNA. Zn(2+) serves as cofactor.

It is found in the cytoplasm. Its function is as follows. One of several proteins that assist in the late maturation steps of the functional core of the 30S ribosomal subunit. Helps release RbfA from mature subunits. May play a role in the assembly of ribosomal proteins into the subunit. Circularly permuted GTPase that catalyzes slow GTP hydrolysis, GTPase activity is stimulated by the 30S ribosomal subunit. This chain is Small ribosomal subunit biogenesis GTPase RsgA, found in Proteus mirabilis (strain HI4320).